Here is a 216-residue protein sequence, read N- to C-terminus: ATP-dependent dethiobiotin synthetase BioD (216 aa).

13–18 lines the ATP pocket; it reads EVGKTY. A Mg(2+)-binding site is contributed by T17. The active site involves K38. T42 is a substrate binding site. Residues D47 and 112-115 each bind ATP; that span reads EGVG. Mg(2+) is bound by residues D47 and E112.

The protein belongs to the dethiobiotin synthetase family. As to quaternary structure, homodimer. Mg(2+) serves as cofactor.

It is found in the cytoplasm. The enzyme catalyses (7R,8S)-7,8-diammoniononanoate + CO2 + ATP = (4R,5S)-dethiobiotin + ADP + phosphate + 3 H(+). It functions in the pathway cofactor biosynthesis; biotin biosynthesis; biotin from 7,8-diaminononanoate: step 1/2. Catalyzes a mechanistically unusual reaction, the ATP-dependent insertion of CO2 between the N7 and N8 nitrogen atoms of 7,8-diaminopelargonic acid (DAPA, also called 7,8-diammoniononanoate) to form a ureido ring. In Endomicrobium trichonymphae, this protein is ATP-dependent dethiobiotin synthetase BioD.